Reading from the N-terminus, the 543-residue chain is Vibriobactin-specific 2,3-dihydroxybenzoate-AMP ligase (543 aa).

A helical membrane pass occupies residues 240–259 (FPLSSPGALGVFWAGGCVVL).

Belongs to the ATP-dependent AMP-binding enzyme family.

Its subcellular location is the cell inner membrane. It carries out the reaction 2,3-dihydroxybenzoate + holo-[ACP] + ATP = 2,3-dihydroxybenzoyl-[ACP] + AMP + diphosphate. It participates in siderophore biosynthesis; vibriobactin biosynthesis. Its function is as follows. Activation of the carboxylate group of 2,3-dihydroxy-benzoate (DHB), via ATP-dependent PPi exchange reactions, to the acyladenylate, preparing that molecule for the final stages of vibriobactin synthesis. The polypeptide is Vibriobactin-specific 2,3-dihydroxybenzoate-AMP ligase (vibE) (Vibrio cholerae serotype O1 (strain ATCC 39315 / El Tor Inaba N16961)).